The following is a 404-amino-acid chain: Cysteine desulfurase IscS (404 aa).

Pyridoxal 5'-phosphate contacts are provided by residues 75–76 (AT), Asn-155, Gln-183, and 203–205 (SAH). N6-(pyridoxal phosphate)lysine is present on Lys-206. Pyridoxal 5'-phosphate is bound at residue Thr-243. Cys-328 functions as the Cysteine persulfide intermediate in the catalytic mechanism. Cys-328 lines the [2Fe-2S] cluster pocket.

The protein belongs to the class-V pyridoxal-phosphate-dependent aminotransferase family. NifS/IscS subfamily. In terms of assembly, homodimer. Forms a heterotetramer with IscU, interacts with other sulfur acceptors. Requires pyridoxal 5'-phosphate as cofactor.

It localises to the cytoplasm. It catalyses the reaction (sulfur carrier)-H + L-cysteine = (sulfur carrier)-SH + L-alanine. It functions in the pathway cofactor biosynthesis; iron-sulfur cluster biosynthesis. Its function is as follows. Master enzyme that delivers sulfur to a number of partners involved in Fe-S cluster assembly, tRNA modification or cofactor biosynthesis. Catalyzes the removal of elemental sulfur atoms from cysteine to produce alanine. Functions as a sulfur delivery protein for Fe-S cluster synthesis onto IscU, an Fe-S scaffold assembly protein, as well as other S acceptor proteins. This chain is Cysteine desulfurase IscS, found in Neisseria gonorrhoeae (strain ATCC 700825 / FA 1090).